Here is a 199-residue protein sequence, read N- to C-terminus: Dephospho-CoA kinase (199 aa).

In terms of domain architecture, DPCK spans 3 to 199 (ILGLTGSIGM…ATAKMPQRRA (197 aa)). 11–16 (GMGKST) lines the ATP pocket.

It belongs to the CoaE family.

The protein resides in the cytoplasm. The enzyme catalyses 3'-dephospho-CoA + ATP = ADP + CoA + H(+). It functions in the pathway cofactor biosynthesis; coenzyme A biosynthesis; CoA from (R)-pantothenate: step 5/5. Functionally, catalyzes the phosphorylation of the 3'-hydroxyl group of dephosphocoenzyme A to form coenzyme A. The sequence is that of Dephospho-CoA kinase from Rhodopseudomonas palustris (strain BisB18).